Reading from the N-terminus, the 335-residue chain is Transcriptional coactivator YAP1-B (335 aa).

Low complexity predominate over residues 1–13; sequence MEPGSQQQPSAPG. Residues 1 to 21 are disordered; the sequence is MEPGSQQQPSAPGQQPPPVGH. Phosphoserine; by LATS1 and LATS2 is present on Ser-30. The segment covering 114–124 has biased composition (polar residues); sequence MNQQRLSQSAP. Residues 114–146 are disordered; the sequence is MNQQRLSQSAPVKSPPALQPQSPPSGVLGSGGN. Positions 126-136 are enriched in pro residues; that stretch reads KSPPALQPQSP. The transactivation domain stretch occupies residues 137 to 335; it reads PSGVLGSGGN…LDKESFLTWL (199 aa). A coiled-coil region spans residues 145–173; it reads GNQQMRLQQLQMEKERLRLKHQELLRQVR.

This sequence belongs to the YAP1 family. Post-translationally, phosphorylated by lats1 and lats2; leading to cytoplasmic translocation and inactivation.

Its subcellular location is the cytoplasm. The protein resides in the nucleus. It localises to the cell junction. It is found in the tight junction. The protein localises to the cell membrane. Transcriptional regulator which can act both as a coactivator and a corepressor and is the critical downstream regulatory target in the Hippo signaling pathway that plays a pivotal role in organ size control and tumor suppression by restricting proliferation and promoting apoptosis. Plays a key role in tissue tension and 3D tissue shape by regulating cortical actomyosin network formation. The chain is Transcriptional coactivator YAP1-B from Xenopus laevis (African clawed frog).